The chain runs to 153 residues: Nucleoside diphosphate kinase (153 aa).

Residues Lys-11, Phe-59, Arg-87, Thr-93, Arg-104, and Asn-114 each coordinate ATP. His-117 functions as the Pros-phosphohistidine intermediate in the catalytic mechanism.

This sequence belongs to the NDK family. The cofactor is Mg(2+).

It catalyses the reaction a 2'-deoxyribonucleoside 5'-diphosphate + ATP = a 2'-deoxyribonucleoside 5'-triphosphate + ADP. The enzyme catalyses a ribonucleoside 5'-diphosphate + ATP = a ribonucleoside 5'-triphosphate + ADP. Major role in the synthesis of nucleoside triphosphates other than ATP. The ATP gamma phosphate is transferred to the NDP beta phosphate via a ping-pong mechanism, using a phosphorylated active-site intermediate. This Emericella nidulans (strain FGSC A4 / ATCC 38163 / CBS 112.46 / NRRL 194 / M139) (Aspergillus nidulans) protein is Nucleoside diphosphate kinase (swoH).